A 276-amino-acid polypeptide reads, in one-letter code: 2,3,4,5-tetrahydropyridine-2,6-dicarboxylate N-succinyltransferase (276 aa).

Substrate is bound by residues Arg104 and Asp141.

It belongs to the transferase hexapeptide repeat family. In terms of assembly, homotrimer.

It localises to the cytoplasm. The catalysed reaction is (S)-2,3,4,5-tetrahydrodipicolinate + succinyl-CoA + H2O = (S)-2-succinylamino-6-oxoheptanedioate + CoA. Its pathway is amino-acid biosynthesis; L-lysine biosynthesis via DAP pathway; LL-2,6-diaminopimelate from (S)-tetrahydrodipicolinate (succinylase route): step 1/3. In Legionella pneumophila (strain Paris), this protein is 2,3,4,5-tetrahydropyridine-2,6-dicarboxylate N-succinyltransferase.